We begin with the raw amino-acid sequence, 40 residues long: Photosystem II reaction center protein J (40 aa).

Residues 8-28 (IPLWLIGTVTGIPVIGLIGIF) traverse the membrane as a helical segment.

This sequence belongs to the PsbJ family. In terms of assembly, PSII is composed of 1 copy each of membrane proteins PsbA, PsbB, PsbC, PsbD, PsbE, PsbF, PsbH, PsbI, PsbJ, PsbK, PsbL, PsbM, PsbT, PsbX, PsbY, PsbZ, Psb30/Ycf12, at least 3 peripheral proteins of the oxygen-evolving complex and a large number of cofactors. It forms dimeric complexes.

The protein localises to the plastid. The protein resides in the chloroplast thylakoid membrane. One of the components of the core complex of photosystem II (PSII). PSII is a light-driven water:plastoquinone oxidoreductase that uses light energy to abstract electrons from H(2)O, generating O(2) and a proton gradient subsequently used for ATP formation. It consists of a core antenna complex that captures photons, and an electron transfer chain that converts photonic excitation into a charge separation. The chain is Photosystem II reaction center protein J from Vitis vinifera (Grape).